A 622-amino-acid polypeptide reads, in one-letter code: Intermediate filament protein ifc-2 (622 aa).

Residues 19-54 (SGTYASGFGQLVSGMSSAGAICTTQIRDAREREKRE) are head. Residues 51 to 399 (EKREIGLLND…ILLNGANVTT (349 aa)) form the IF rod domain. The interval 55-86 (IGLLNDRLADYIEKVRFLEAQNRCLSHDIDIL) is coil 1A. Positions 87 to 99 (RNGFSGGGHVSGL) are linker 1. The coil 1B stretch occupies residues 100–237 (FDAEINQAKH…TENNVRIEQE (138 aa)). The segment at 238–255 (LVFIRRDTTADNRDYFRH) is linker 12. Residues 256–399 (ELQAAIRDIR…ILLNGANVTT (144 aa)) are coil 2. Residues 400-550 (YTSNTHGSGS…RVDVGGFRIE (151 aa)) are tail. The region spanning 509 to 622 (SGRHFHSWYL…EERAWFVYLD (114 aa)) is the LTD domain.

Belongs to the intermediate filament family. As to expression, expressed in intestinal cells and at desmosomes in intestine and pharynx of the larva.

The protein localises to the cytoplasm. Its function is as follows. Cytoplasmic intermediate filaments provide mechanical strength to cells. Not essential protein, although its absence leads to mild defects in locomotion. The polypeptide is Intermediate filament protein ifc-2 (ifc-2) (Caenorhabditis elegans).